A 443-amino-acid chain; its full sequence is Sperm-associated antigen 4 protein (443 aa).

Positions 1–36 (MRRSPRSGSAASSHNHTPNFYSENSNSSHSATSGDS) are enriched in low complexity. The tract at residues 1-107 (MRRSPRSGSA…VRGGASEPSG (107 aa)) is disordered. Helical transmembrane passes span 137–157 (FLSL…DGLV) and 168–188 (FLFT…WGLL). A coiled-coil region spans residues 203–244 (TLSQYHHRVHSQGQQLQQLQAELNKLHKEVSSVRAAHSERVA). The region spanning 267–427 (GASIDLEKTS…YRVRAHGVRT (161 aa)) is the SUN domain.

As to quaternary structure, self-associates. Interacts with ODF1. May associate with microtubules. Interacts with SUN3 and SYNE1; suggesting the formation of a spermatogenesis-specific LINC complex; a SUN domain-based heterotrimer of SPAG4 and SUN3 may associate with SYNE1. Interacts with SEPT12 and LMNB1; during spermatogenesis. Isoform 1 is testis specific and is exclusively expressed in spermatids.

Its subcellular location is the membrane. It localises to the cytoplasm. It is found in the cytoskeleton. The protein resides in the nucleus envelope. The protein localises to the nucleus inner membrane. Its subcellular location is the flagellum axoneme. Its function is as follows. Involved in spermatogenesis. Required for sperm head formation but not required to establish and maintain general polarity of the sperm head. Required for anchoring and organization of the manchette. Required for targeting of SUN3 and probably SYNE1 through a probable SUN1:SYNE3 LINC complex to the nuclear envelope and involved in accurate posterior sperm head localization of the complex. May anchor SUN3 the nuclear envelope. Involved in maintenance of the nuclear envelope integrity. May assist the organization and assembly of outer dense fibers (ODFs), a specific structure of the sperm tail. This Mus musculus (Mouse) protein is Sperm-associated antigen 4 protein (Spag4).